The following is a 184-amino-acid chain: Photosystem I assembly protein Ycf4 (184 aa).

The next 2 membrane-spanning stretches (helical) occupy residues 22–42 and 57–77; these read FCWA…GTSS and ILFF…LFIS.

The protein belongs to the Ycf4 family.

The protein resides in the plastid. It localises to the chloroplast thylakoid membrane. Seems to be required for the assembly of the photosystem I complex. This chain is Photosystem I assembly protein Ycf4, found in Panax ginseng (Korean ginseng).